Reading from the N-terminus, the 238-residue chain is Flagellar L-ring protein (238 aa).

The signal sequence occupies residues 1–16 (MNKAILAVAMVLLLAG). A lipid anchor (N-palmitoyl cysteine) is attached at C17. Residue C17 is the site of S-diacylglycerol cysteine attachment.

It belongs to the FlgH family. The basal body constitutes a major portion of the flagellar organelle and consists of four rings (L,P,S, and M) mounted on a central rod.

The protein localises to the cell outer membrane. It is found in the bacterial flagellum basal body. In terms of biological role, assembles around the rod to form the L-ring and probably protects the motor/basal body from shearing forces during rotation. The protein is Flagellar L-ring protein of Brucella canis (strain ATCC 23365 / NCTC 10854 / RM-666).